We begin with the raw amino-acid sequence, 893 residues long: Ubiquitin-like protease 2 (893 aa).

A protease region spans residues 538-800 (PVVLLVKDIK…YNLILQQADK (263 aa)). Catalysis depends on residues His644, Asp678, and Cys743.

Belongs to the peptidase C48 family.

It is found in the nucleus. It localises to the cytoplasm. The protein resides in the cytosol. Functionally, protease that catalyzes two essential functions in the smo-1 pathway: processing of full-length smo-1 to their mature forms and deconjugation of smo-1 from targeted proteins. May deconjugate smo-1 from the cadherin protein hmr-1 and plays a role in its recruitment to and the maintenance of adherens junctions. Required for epidermal morphogenesis during embryonic development. This Caenorhabditis elegans protein is Ubiquitin-like protease 2.